Here is a 712-residue protein sequence, read N- to C-terminus: DNA ligase (712 aa).

The segment covering 1 to 22 (MSTQYDSDSSPAASNSGSADPA) has biased composition (low complexity). Residues 1 to 23 (MSTQYDSDSSPAASNSGSADPAL) form a disordered region. An NAD(+)-binding site is contributed by 53–57 (DAEFD). The segment at 69 to 93 (SHPEAVTGPSPTTEVAPSPPESSPF) is disordered. Residues 104 to 105 (SL) and Glu129 contribute to the NAD(+) site. Lys131 acts as the N6-AMP-lysine intermediate in catalysis. NAD(+) is bound by residues Arg152, Glu192, Lys308, and Lys332. Positions 426, 429, 445, and 451 each coordinate Zn(2+). The 89-residue stretch at 624–712 (IQADLLAGLS…GPGKGDAEED (89 aa)) folds into the BRCT domain.

The protein belongs to the NAD-dependent DNA ligase family. LigA subfamily. Mg(2+) serves as cofactor. The cofactor is Mn(2+).

The enzyme catalyses NAD(+) + (deoxyribonucleotide)n-3'-hydroxyl + 5'-phospho-(deoxyribonucleotide)m = (deoxyribonucleotide)n+m + AMP + beta-nicotinamide D-nucleotide.. DNA ligase that catalyzes the formation of phosphodiester linkages between 5'-phosphoryl and 3'-hydroxyl groups in double-stranded DNA using NAD as a coenzyme and as the energy source for the reaction. It is essential for DNA replication and repair of damaged DNA. This is DNA ligase from Corynebacterium urealyticum (strain ATCC 43042 / DSM 7109).